Reading from the N-terminus, the 299-residue chain is NAD kinase (299 aa).

D75 serves as the catalytic Proton acceptor. NAD(+) is bound by residues 75–76 (DG), 149–150 (ND), R177, D179, 190–195 (TAYALS), A214, and Q248.

The protein belongs to the NAD kinase family. It depends on a divalent metal cation as a cofactor.

The protein resides in the cytoplasm. It carries out the reaction NAD(+) + ATP = ADP + NADP(+) + H(+). In terms of biological role, involved in the regulation of the intracellular balance of NAD and NADP, and is a key enzyme in the biosynthesis of NADP. Catalyzes specifically the phosphorylation on 2'-hydroxyl of the adenosine moiety of NAD to yield NADP. The polypeptide is NAD kinase (Burkholderia thailandensis (strain ATCC 700388 / DSM 13276 / CCUG 48851 / CIP 106301 / E264)).